Consider the following 843-residue polypeptide: Protein translocase subunit SecA (843 aa).

ATP-binding positions include Q91, 109-113 (GEGKT), and D498. A compositionally biased stretch (basic and acidic residues) spans 796–825 (DFGKAEHVSAEDGKEKAKAEPYVKDEHIGR). Residues 796-833 (DFGKAEHVSAEDGKEKAKAEPYVKDEHIGRNDPCPCGS) are disordered. Residues C829, C831, C840, and H841 each coordinate Zn(2+).

It belongs to the SecA family. As to quaternary structure, monomer and homodimer. Part of the essential Sec protein translocation apparatus which comprises SecA, SecYEG and auxiliary proteins SecDF. Other proteins may also be involved. Zn(2+) serves as cofactor.

Its subcellular location is the cell membrane. It localises to the cytoplasm. The catalysed reaction is ATP + H2O + cellular proteinSide 1 = ADP + phosphate + cellular proteinSide 2.. Functionally, part of the Sec protein translocase complex. Interacts with the SecYEG preprotein conducting channel. Has a central role in coupling the hydrolysis of ATP to the transfer of proteins into and across the cell membrane, serving as an ATP-driven molecular motor driving the stepwise translocation of polypeptide chains across the membrane. The sequence is that of Protein translocase subunit SecA from Staphylococcus saprophyticus subsp. saprophyticus (strain ATCC 15305 / DSM 20229 / NCIMB 8711 / NCTC 7292 / S-41).